Reading from the N-terminus, the 324-residue chain is N-acetyl-gamma-glutamyl-phosphate reductase (324 aa).

Residue C131 is part of the active site.

The protein belongs to the NAGSA dehydrogenase family. Type 1 subfamily.

The protein localises to the cytoplasm. It carries out the reaction N-acetyl-L-glutamate 5-semialdehyde + phosphate + NADP(+) = N-acetyl-L-glutamyl 5-phosphate + NADPH + H(+). It functions in the pathway amino-acid biosynthesis; L-arginine biosynthesis; N(2)-acetyl-L-ornithine from L-glutamate: step 3/4. In terms of biological role, catalyzes the NADPH-dependent reduction of N-acetyl-5-glutamyl phosphate to yield N-acetyl-L-glutamate 5-semialdehyde. The polypeptide is N-acetyl-gamma-glutamyl-phosphate reductase (Bradyrhizobium sp. (strain ORS 278)).